Consider the following 215-residue polypeptide: Adenylate kinase (215 aa).

Residue 10-15 (GAGKGT) participates in ATP binding. The interval 30-59 (STGDMLRAAVKAGTELGLIAKSVMDSGGLV) is NMP. AMP is bound by residues Thr-31, Arg-36, 57 to 59 (GLV), 85 to 88 (GFPR), and Gln-92. Residues 122–159 (GRRVHEASGRVYHTVYNPPKVEGKDDVTGDDLVQRKDD) are LID. ATP is bound by residues Arg-123 and 132 to 133 (VY). Positions 156 and 167 each coordinate AMP. Gly-201 serves as a coordination point for ATP.

This sequence belongs to the adenylate kinase family. Monomer.

It localises to the cytoplasm. It carries out the reaction AMP + ATP = 2 ADP. It participates in purine metabolism; AMP biosynthesis via salvage pathway; AMP from ADP: step 1/1. Catalyzes the reversible transfer of the terminal phosphate group between ATP and AMP. Plays an important role in cellular energy homeostasis and in adenine nucleotide metabolism. The chain is Adenylate kinase from Pseudomonas fluorescens (strain SBW25).